The following is a 237-amino-acid chain: Phosphoserine phosphatase (237 aa).

Residue D30 is the Nucleophile of the active site. Mg(2+) contacts are provided by D30 and D32. The active-site Proton donor is D32. Substrate is bound by residues E39, R76, 120–121, and K169; that span reads SG. D192 contacts Mg(2+). Substrate is bound at residue N195.

Belongs to the HAD-like hydrolase superfamily. SerB family. Mg(2+) serves as cofactor.

The enzyme catalyses O-phospho-L-serine + H2O = L-serine + phosphate. The catalysed reaction is O-phospho-D-serine + H2O = D-serine + phosphate. Its pathway is amino-acid biosynthesis; L-serine biosynthesis; L-serine from 3-phospho-D-glycerate: step 3/3. Its function is as follows. Catalyzes the dephosphorylation of phosphoserine (P-Ser) in vitro. Also catalyzes the dephosphorylation of phosphothreonine (P-Thr) in vitro. This chain is Phosphoserine phosphatase, found in Albidiferax ferrireducens (strain ATCC BAA-621 / DSM 15236 / T118) (Rhodoferax ferrireducens).